Consider the following 544-residue polypeptide: NXPE family member 4 (544 aa).

The first 27 residues, 1–27 (MKISMINYKSLLALLFILASWIIFTVF), serve as a signal peptide directing secretion. N29, N38, N47, N48, N92, N160, and N210 each carry an N-linked (GlcNAc...) asparagine glycan.

It belongs to the NXPE family.

The protein localises to the secreted. This chain is NXPE family member 4 (NXPE4), found in Homo sapiens (Human).